Here is a 575-residue protein sequence, read N- to C-terminus: Dihydroxy-acid dehydratase (575 aa).

Residues 1 to 25 (MPTTDSARAADIKQPDIKPRSRDVT) are disordered. Basic and acidic residues predominate over residues 8–25 (RAADIKQPDIKPRSRDVT). Position 64 (C64) interacts with [2Fe-2S] cluster. Residue D96 coordinates Mg(2+). C137 lines the [2Fe-2S] cluster pocket. The Mg(2+) site is built by D138 and K139. Position 139 is an N6-carboxylysine (K139). Residue C214 coordinates [2Fe-2S] cluster. E465 lines the Mg(2+) pocket. S491 acts as the Proton acceptor in catalysis.

It belongs to the IlvD/Edd family. As to quaternary structure, homodimer. [2Fe-2S] cluster serves as cofactor. Mg(2+) is required as a cofactor.

It catalyses the reaction (2R)-2,3-dihydroxy-3-methylbutanoate = 3-methyl-2-oxobutanoate + H2O. The catalysed reaction is (2R,3R)-2,3-dihydroxy-3-methylpentanoate = (S)-3-methyl-2-oxopentanoate + H2O. It functions in the pathway amino-acid biosynthesis; L-isoleucine biosynthesis; L-isoleucine from 2-oxobutanoate: step 3/4. Its pathway is amino-acid biosynthesis; L-valine biosynthesis; L-valine from pyruvate: step 3/4. Functions in the biosynthesis of branched-chain amino acids. Catalyzes the dehydration of (2R,3R)-2,3-dihydroxy-3-methylpentanoate (2,3-dihydroxy-3-methylvalerate) into 2-oxo-3-methylpentanoate (2-oxo-3-methylvalerate) and of (2R)-2,3-dihydroxy-3-methylbutanoate (2,3-dihydroxyisovalerate) into 2-oxo-3-methylbutanoate (2-oxoisovalerate), the penultimate precursor to L-isoleucine and L-valine, respectively. This Mycolicibacterium paratuberculosis (strain ATCC BAA-968 / K-10) (Mycobacterium paratuberculosis) protein is Dihydroxy-acid dehydratase.